The chain runs to 116 residues: Flagellar hook-basal body complex protein FliE (116 aa).

Belongs to the FliE family.

The protein resides in the bacterial flagellum basal body. In Rhizobium rhizogenes (strain K84 / ATCC BAA-868) (Agrobacterium radiobacter), this protein is Flagellar hook-basal body complex protein FliE.